A 123-amino-acid chain; its full sequence is Fluoride-specific ion channel FluC (123 aa).

4 consecutive transmembrane segments (helical) span residues 3 to 23, 34 to 54, 67 to 87, and 99 to 119; these read IAWVALGGAIGAVARYVLSNA, WGTLSVNLLGSFIMGLLFYLF, LVLVGGLGAFTTFSTFSLETL, and LLNMLSSVLLCVLAAYLGLVV. Positions 74 and 77 each coordinate Na(+).

This sequence belongs to the fluoride channel Fluc/FEX (TC 1.A.43) family.

It localises to the cell inner membrane. The catalysed reaction is fluoride(in) = fluoride(out). Its activity is regulated as follows. Na(+) is not transported, but it plays an essential structural role and its presence is essential for fluoride channel function. Fluoride-specific ion channel. Important for reducing fluoride concentration in the cell, thus reducing its toxicity. This Magnetococcus marinus (strain ATCC BAA-1437 / JCM 17883 / MC-1) protein is Fluoride-specific ion channel FluC.